Reading from the N-terminus, the 387-residue chain is S-adenosylmethionine synthase (387 aa).

His19 lines the ATP pocket. Asp21 is a Mg(2+) binding site. K(+) is bound at residue Glu47. Gln103 lines the L-methionine pocket. Positions 103 to 113 (QSPDIAQGVEL) are flexible loop. ATP is bound by residues 167–169 (DMK), 233–234 (RF), Asp242, 248–249 (RK), Ala265, and Lys269. Asp242 contacts L-methionine. Lys273 is a binding site for L-methionine.

The protein belongs to the AdoMet synthase family. Homotetramer; dimer of dimers. It depends on Mg(2+) as a cofactor. Requires K(+) as cofactor.

The protein localises to the cytoplasm. The enzyme catalyses L-methionine + ATP + H2O = S-adenosyl-L-methionine + phosphate + diphosphate. It functions in the pathway amino-acid biosynthesis; S-adenosyl-L-methionine biosynthesis; S-adenosyl-L-methionine from L-methionine: step 1/1. Catalyzes the formation of S-adenosylmethionine (AdoMet) from methionine and ATP. The overall synthetic reaction is composed of two sequential steps, AdoMet formation and the subsequent tripolyphosphate hydrolysis which occurs prior to release of AdoMet from the enzyme. This is S-adenosylmethionine synthase from Mycoplasma capricolum subsp. capricolum (strain California kid / ATCC 27343 / NCTC 10154).